The chain runs to 203 residues: Holliday junction branch migration complex subunit RuvA (203 aa).

Positions 1–64 are domain I; the sequence is MIGRLRGIII…EDAQLLYGFN (64 aa). The segment at 65–142 is domain II; sequence NKQERTLFKE…KGLHGDLFTP (78 aa). The segment at 143–154 is flexible linker; sequence AADLVLTSPASP. Residues 155-203 are domain III; it reads ATNDAEQEAVAALVALGYKPQEASRMVSKIARPDASSETLIREALRAAL.

Belongs to the RuvA family. As to quaternary structure, homotetramer. Forms an RuvA(8)-RuvB(12)-Holliday junction (HJ) complex. HJ DNA is sandwiched between 2 RuvA tetramers; dsDNA enters through RuvA and exits via RuvB. An RuvB hexamer assembles on each DNA strand where it exits the tetramer. Each RuvB hexamer is contacted by two RuvA subunits (via domain III) on 2 adjacent RuvB subunits; this complex drives branch migration. In the full resolvosome a probable DNA-RuvA(4)-RuvB(12)-RuvC(2) complex forms which resolves the HJ.

It is found in the cytoplasm. Functionally, the RuvA-RuvB-RuvC complex processes Holliday junction (HJ) DNA during genetic recombination and DNA repair, while the RuvA-RuvB complex plays an important role in the rescue of blocked DNA replication forks via replication fork reversal (RFR). RuvA specifically binds to HJ cruciform DNA, conferring on it an open structure. The RuvB hexamer acts as an ATP-dependent pump, pulling dsDNA into and through the RuvAB complex. HJ branch migration allows RuvC to scan DNA until it finds its consensus sequence, where it cleaves and resolves the cruciform DNA. This chain is Holliday junction branch migration complex subunit RuvA, found in Escherichia coli O9:H4 (strain HS).